The following is a 356-amino-acid chain: Heat-inducible transcription repressor HrcA (356 aa).

Belongs to the HrcA family.

Negative regulator of class I heat shock genes (grpE-dnaK-dnaJ and groELS operons). Prevents heat-shock induction of these operons. The polypeptide is Heat-inducible transcription repressor HrcA (Bartonella quintana (strain Toulouse) (Rochalimaea quintana)).